A 357-amino-acid polypeptide reads, in one-letter code: Molybdenum import ATP-binding protein ModC (357 aa).

An ABC transporter domain is found at 1–233 (MRLEVEARLR…PFPTSGPGRR (233 aa)). 31 to 38 (GRSGSGKT) provides a ligand contact to ATP. Positions 293-357 (GISALNVLPG…AVVKTVALDY (65 aa)) constitute a Mop domain.

This sequence belongs to the ABC transporter superfamily. Molybdate importer (TC 3.A.1.8) family. The complex is composed of two ATP-binding proteins (ModC), two transmembrane proteins (ModB) and a solute-binding protein (ModA).

Its subcellular location is the cell inner membrane. The catalysed reaction is molybdate(out) + ATP + H2O = molybdate(in) + ADP + phosphate + H(+). Its function is as follows. Part of the ABC transporter complex ModABC involved in molybdenum import. Responsible for energy coupling to the transport system. This Rhizobium meliloti (strain 1021) (Ensifer meliloti) protein is Molybdenum import ATP-binding protein ModC.